The sequence spans 257 residues: Pyridoxine 5'-phosphate synthase (257 aa).

N6 serves as a coordination point for 3-amino-2-oxopropyl phosphate. 1-deoxy-D-xylulose 5-phosphate is bound at residue D8–H9. 3-amino-2-oxopropyl phosphate is bound at residue R17. H42 functions as the Proton acceptor in the catalytic mechanism. 1-deoxy-D-xylulose 5-phosphate contacts are provided by R44 and H49. E69 (proton acceptor) is an active-site residue. T99 lines the 1-deoxy-D-xylulose 5-phosphate pocket. H211 acts as the Proton donor in catalysis. 3-amino-2-oxopropyl phosphate is bound by residues G212 and G233 to Q234.

It belongs to the PNP synthase family. Homooctamer; tetramer of dimers.

It localises to the cytoplasm. It catalyses the reaction 3-amino-2-oxopropyl phosphate + 1-deoxy-D-xylulose 5-phosphate = pyridoxine 5'-phosphate + phosphate + 2 H2O + H(+). It functions in the pathway cofactor biosynthesis; pyridoxine 5'-phosphate biosynthesis; pyridoxine 5'-phosphate from D-erythrose 4-phosphate: step 5/5. Functionally, catalyzes the complicated ring closure reaction between the two acyclic compounds 1-deoxy-D-xylulose-5-phosphate (DXP) and 3-amino-2-oxopropyl phosphate (1-amino-acetone-3-phosphate or AAP) to form pyridoxine 5'-phosphate (PNP) and inorganic phosphate. This is Pyridoxine 5'-phosphate synthase from Campylobacter hominis (strain ATCC BAA-381 / DSM 21671 / CCUG 45161 / LMG 19568 / NCTC 13146 / CH001A).